The primary structure comprises 132 residues: Fatty acid-binding protein, brain (132 aa).

Position 2 is an N-acetylvaline (V2). 127 to 129 is a binding site for a fatty acid; it reads RHY.

This sequence belongs to the calycin superfamily. Fatty-acid binding protein (FABP) family. As to quaternary structure, monomer.

It localises to the cytoplasm. In terms of biological role, FABPs are thought to play a role in the intracellular transport of long-chain fatty acids and their acyl-CoA esters. Binds oleic and palmitic acids but not palmitoyl CoA. The protein is Fatty acid-binding protein, brain (FABP7) of Bos taurus (Bovine).